Consider the following 495-residue polypeptide: Glycerol kinase (495 aa).

ADP is bound at residue T11. ATP-binding residues include T11, T12, and S13. A sn-glycerol 3-phosphate-binding site is contributed by T11. Position 15 (R15) interacts with ADP. Sn-glycerol 3-phosphate is bound by residues R81, E82, Y133, and D242. Residues R81, E82, Y133, D242, and Q243 each contribute to the glycerol site. 2 residues coordinate ADP: T264 and G307. Positions 264, 307, 311, and 408 each coordinate ATP. Residue G408 coordinates ADP.

The protein belongs to the FGGY kinase family.

It catalyses the reaction glycerol + ATP = sn-glycerol 3-phosphate + ADP + H(+). The protein operates within polyol metabolism; glycerol degradation via glycerol kinase pathway; sn-glycerol 3-phosphate from glycerol: step 1/1. Its activity is regulated as follows. Inhibited by fructose 1,6-bisphosphate (FBP). In terms of biological role, key enzyme in the regulation of glycerol uptake and metabolism. Catalyzes the phosphorylation of glycerol to yield sn-glycerol 3-phosphate. The sequence is that of Glycerol kinase from Geobacter sp. (strain M21).